Consider the following 116-residue polypeptide: UPF0102 protein Neut_1662 (116 aa).

Belongs to the UPF0102 family.

This chain is UPF0102 protein Neut_1662, found in Nitrosomonas eutropha (strain DSM 101675 / C91 / Nm57).